Here is a 216-residue protein sequence, read N- to C-terminus: Probable RNA 2'-phosphotransferase 1 (216 aa).

This sequence belongs to the KptA/TPT1 family.

Removes the 2'-phosphate from RNA via an intermediate in which the phosphate is ADP-ribosylated by NAD followed by a presumed transesterification to release the RNA and generate ADP-ribose 1''-2''-cyclic phosphate (APPR&gt;P). May function as an ADP-ribosylase. The polypeptide is Probable RNA 2'-phosphotransferase 1 (kptA1) (Archaeoglobus fulgidus (strain ATCC 49558 / DSM 4304 / JCM 9628 / NBRC 100126 / VC-16)).